Reading from the N-terminus, the 584-residue chain is MSREAFDVPNIGTNKFLKVTPNLFTPERLNLFDDVELYLTLIKASKCVEQGERLHNISWRILNKAVLKEHNINRSKKRDGVKNIYYVLNPNNKQPIKPKQAAVKQPPLQKANLPPTTAKQNVLTRPMTSPAIAQGAHDRSLDNPNSTNNDVKNDVAPNRQFSKSTTSGLFSNFADKYQKMKNVNHVANKEEPQTIITGFDTSTVITKKPLQSRRSRSPFQHIGDMNMNCIDNETSKSTSPTLENMGSRKSSFPQKESLFGRPRSYKNDQNGQLSLSKTSSRKGKNKIFFSSEDEDSDWDSVSNDSEFYADEDDEEYDDYNEEEADQYYRRQWDKLLFAKNQQNLDSTKSSVSSANTINSNTSHDPVRKSLLSGLFLSEANSNSNNHNTAHSEYASKHVSPTPQSSHSNIGPQPQQNPPSANGIKQQKPSLKTSNVTALASLSPPQPSNNERLSMDIQKDFKTDNESNHLYESNAPLTAQTILPTALSTHMFLPNNIHQQRMAIATGSNTRHRFSRRQSMDIPSKNRNTGFLKTRMEISEEEKMVRTISRLDNTSIANSNGNGNDDTSNQRTEALGRKTSNGGRI.

Thr25 carries the phosphothreonine modification. Disordered regions lie at residues 95 to 167 (PIKP…STTS), 209 to 279 (PLQS…SKTS), 291 to 320 (SEDE…DDYN), 343 to 366 (NLDS…HDPV), and 381 to 432 (SNSN…SLKT). 3 stretches are compositionally biased toward polar residues: residues 114 to 127 (PPTT…TRPM), 229 to 254 (CIDN…SFPQ), and 267 to 278 (NDQNGQLSLSKT). Residues Ser247 and Ser276 each carry the phosphoserine modification. The span at 307–320 (FYADEDDEEYDDYN) shows a compositional bias: acidic residues. Positions 343-363 (NLDSTKSSVSSANTINSNTSH) are enriched in polar residues. Residues 381 to 392 (SNSNNHNTAHSE) are compositionally biased toward low complexity. Residues 398 to 432 (VSPTPQSSHSNIGPQPQQNPPSANGIKQQKPSLKT) are compositionally biased toward polar residues. Ser442 bears the Phosphoserine mark. Ser518 carries the post-translational modification Phosphoserine; by PKA. Residues 551–584 (DNTSIANSNGNGNDDTSNQRTEALGRKTSNGGRI) form a disordered region. A compositionally biased stretch (low complexity) spans 557–568 (NSNGNGNDDTSN).

The protein resides in the nucleus. Its function is as follows. Negative regulator of Ras-cAMP pathway. Involved in transcriptional regulation of galactose-inducible genes. This chain is Negative regulator of RAS-cAMP pathway (MKS1), found in Saccharomyces cerevisiae (strain ATCC 204508 / S288c) (Baker's yeast).